The sequence spans 1720 residues: 6-methylcalicylic acide synthase (1720 aa).

Residues 1–31 are disordered; the sequence is MDKQSASGEIPAMRWEPYHRRDPRNAKELSK. The Ketosynthase family 3 (KS3) domain occupies 1 to 399; it reads MDKQSASGEI…GTVSHAVIEQ (399 aa). Basic and acidic residues predominate over residues 16–30; that stretch reads EPYHRRDPRNAKELS. Active-site for beta-ketoacyl synthase activity residues include Cys-146, His-281, and His-321. The malonyl-CoA:ACP transacylase (MAT) domain stretch occupies residues 509 to 823; sequence VWVFSGHGAQ…IAQLHCRGAE (315 aa). The tract at residues 868–987 is N-terminal hotdog fold; sequence HTLLGQRIGI…AYWARDIQEA (120 aa). Residues 868–1139 form a dehydratase (DH) domain region; that stretch reads HTLLGQRIGI…FTAMRFSEIE (272 aa). The PKS/mFAS DH domain occupies 868–1144; that stretch reads HTLLGQRIGI…FSEIEGTPGV (277 aa). His-900 (proton acceptor; for dehydratase activity) is an active-site residue. The segment at 1001–1144 is C-terminal hotdog fold; that stretch reads GTRIRDDFSI…FSEIEGTPGV (144 aa). Asp-1065 (proton donor; for dehydratase activity) is an active-site residue. Residues 1148 to 1545 are product template (PT) domain; the sequence is MESLVHQLAW…AVAVQWTSWR (398 aa). The 75-residue stretch at 1644-1718 folds into the Carrier domain; the sequence is VYLDEKIRGC…HLVGWFAEKV (75 aa). Ser-1678 carries the post-translational modification O-(pantetheine 4'-phosphoryl)serine.

It is found in the cytoplasm. The protein resides in the cytosol. The enzyme catalyses 3 malonyl-CoA + acetyl-CoA + NADPH + 3 H(+) = 6-methylsalicylate + 3 CO2 + NADP(+) + 4 CoA + H2O. The protein operates within mycotoxin biosynthesis; patulin biosynthesis. Its function is as follows. 6-methylsalicylic acid synthase; part of the gene cluster that mediates the biosynthesis of patulin, an acetate-derived tetraketide mycotoxin produced by several fungal species that shows antimicrobial properties against several bacteria. PatK catalyzes the first step of the pathway which is the synthesis of 6-methylsalicylic acid via condensation of 1 acetate and 3 malonate units. The pathway begins with the synthesis of 6-methylsalicylic acid by the polyketide synthase (PKS) patK via condensation of acetate and malonate units. The 6-methylsalicylic acid decarboxylase patG then catalyzes the decarboxylation of 6-methylsalicylic acid to yield m-cresol (also known as 3-methylphenol). These first reactions occur in the cytosol. The intermediate m-cresol is then transported into the endoplasmic reticulum where the cytochrome P450 monooxygenase patH converts it to m-hydroxybenzyl alcohol, which is further converted to gentisyl alcohol by the cytochrome P450 monooxygenase patI. The oxidoreductases patJ and patO further convert gentisyl alcohol to isoepoxydon in the vacuole. PatN catalyzes then the transformation of isoepoxydon into phyllostine. The cluster protein patF is responsible for the conversion from phyllostine to neopatulin whereas the alcohol dehydrogenase patD converts neopatulin to E-ascladiol. The steps between isoepoxydon and E-ascladiol occur in the cytosol, and E-ascladiol is probably secreted to the extracellular space by one of the cluster-specific transporters patC or patM. Finally, the secreted patulin synthase patE catalyzes the conversion of E-ascladiol to patulin. This is 6-methylcalicylic acide synthase from Aspergillus clavatus (strain ATCC 1007 / CBS 513.65 / DSM 816 / NCTC 3887 / NRRL 1 / QM 1276 / 107).